Consider the following 66-residue polypeptide: Xenoxin-2 (66 aa).

Intrachain disulfides connect C3/C24, C17/C37, C43/C58, and C59/C64.

As to expression, expressed by the skin dorsal glands.

Its subcellular location is the secreted. Lacks alpha-neurotoxic activity, has apparently no antibacterial activity, nor anti-coagulant potency. This is Xenoxin-2 from Xenopus laevis (African clawed frog).